Reading from the N-terminus, the 323-residue chain is Ankyrin repeat and SOCS box protein 11 (323 aa).

7 ANK repeats span residues 64–93, 97–126, 130–159, 162–191, 195–224, 227–256, and 260–289; these read ADRS…NVNL, NRVS…HVNA, HGAT…KAQL, YLAS…NIEQ, QLGT…SVDH, WLDT…NLNL, and QGKS…ALSQ. The 51-residue stretch at 273–323 folds into the SOCS box domain; it reads SVRQALLLHEGPPALSQLCRLCVRKCLGRTCHHAIYALGLPESLEKFLLYQ.

Belongs to the ankyrin SOCS box (ASB) family. Substrate-recognition component of the ECS(ASB11) complex, composed of ASB11, CUL5, ELOB, ELOC and RNF7/RBX2.

The protein resides in the endoplasmic reticulum. The protein operates within protein modification; protein ubiquitination. Its function is as follows. Substrate-recognition component of a cullin-5-RING E3 ubiquitin-protein ligase complex (ECS complex, also named CRL5 complex), which mediates the ubiquitination and subsequent proteasomal degradation of target proteins, such as BIK, DIRAS2 and RPN1. The ECS(ASB11) complex acts as a regulator of the endoplasmic reticulum unfolded protein response by mediating ubiquitination and degradation of BIK. In Mus musculus (Mouse), this protein is Ankyrin repeat and SOCS box protein 11 (Asb11).